Reading from the N-terminus, the 350-residue chain is Beta-hexosaminidase (350 aa).

Residues D73, R81, R148, and 178-179 (KH) contribute to the substrate site. H191 functions as the Proton donor/acceptor in the catalytic mechanism. D262 acts as the Nucleophile in catalysis.

It belongs to the glycosyl hydrolase 3 family. NagZ subfamily.

The protein resides in the cytoplasm. It catalyses the reaction Hydrolysis of terminal non-reducing N-acetyl-D-hexosamine residues in N-acetyl-beta-D-hexosaminides.. The protein operates within cell wall biogenesis; peptidoglycan recycling. In terms of biological role, plays a role in peptidoglycan recycling by cleaving the terminal beta-1,4-linked N-acetylglucosamine (GlcNAc) from peptide-linked peptidoglycan fragments, giving rise to free GlcNAc, anhydro-N-acetylmuramic acid and anhydro-N-acetylmuramic acid-linked peptides. This Bordetella avium (strain 197N) protein is Beta-hexosaminidase.